The sequence spans 289 residues: Bis(5'-nucleosyl)-tetraphosphatase, symmetrical (289 aa).

It belongs to the Ap4A hydrolase family.

It catalyses the reaction P(1),P(4)-bis(5'-adenosyl) tetraphosphate + H2O = 2 ADP + 2 H(+). Functionally, hydrolyzes diadenosine 5',5'''-P1,P4-tetraphosphate to yield ADP. The protein is Bis(5'-nucleosyl)-tetraphosphatase, symmetrical of Pseudomonas fluorescens (strain ATCC BAA-477 / NRRL B-23932 / Pf-5).